Reading from the N-terminus, the 970-residue chain is Translation initiation factor IF-2 (970 aa).

Disordered stretches follow at residues 54 to 270 and 328 to 348; these read KILA…TATQ and DKRRGRTPGRPMSEEQAKSLS. The span at 87-96 shows a compositional bias: low complexity; it reads QEAQPVEAQP. Residues 98-112 are compositionally biased toward polar residues; the sequence is YEEQPSYEEQPSYEE. Residues 121-149 are compositionally biased toward low complexity; sequence EVAAEAAPEPVEEPASSPEGGAPAGGAEP. Pro residues-rich tracts occupy residues 150-160 and 168-182; these read QPAPEAPPPSA and PSAPPSPAVRPPAPS. Residues 183–253 are compositionally biased toward low complexity; sequence VPAGAQPPGA…PHGPGAQPGQ (71 aa). Positions 469 to 638 constitute a tr-type G domain; that stretch reads IRPPVVTVMG…ALQSEVLELK (170 aa). The G1 stretch occupies residues 478–485; the sequence is GHVDHGKT. Residue 478–485 participates in GTP binding; the sequence is GHVDHGKT. Positions 503 to 507 are G2; the sequence is GITQH. Residues 524–527 form a G3 region; sequence DTPG. GTP is bound by residues 524 to 528 and 578 to 581; these read DTPGH and NKID. The segment at 578–581 is G4; the sequence is NKID. Residues 614–616 form a G5 region; the sequence is SAR.

It belongs to the TRAFAC class translation factor GTPase superfamily. Classic translation factor GTPase family. IF-2 subfamily.

It is found in the cytoplasm. In terms of biological role, one of the essential components for the initiation of protein synthesis. Protects formylmethionyl-tRNA from spontaneous hydrolysis and promotes its binding to the 30S ribosomal subunits. Also involved in the hydrolysis of GTP during the formation of the 70S ribosomal complex. This chain is Translation initiation factor IF-2, found in Anaeromyxobacter sp. (strain Fw109-5).